Consider the following 75-residue polypeptide: MAGFSKVVATIFLMMLLVFATDMMAEAKICEALSGNFKGLCLSSRDCGNVCRREGFTDGSCIGFRLQCFCTKPCA.

The first 27 residues, 1-27 (MAGFSKVVATIFLMMLLVFATDMMAEA), serve as a signal peptide directing secretion. 4 disulfides stabilise this stretch: Cys30/Cys74, Cys41/Cys61, Cys47/Cys68, and Cys51/Cys70.

The protein belongs to the DEFL family. As to quaternary structure, monomer. Expressed in orange and red ripe fruit and to a lesser extent in mature, green fruit. Present in trace in young, green fruit.

It localises to the secreted. In terms of biological role, plant defense peptide with antifungal activity against F.oxysporum and B.cinerea. The polypeptide is Defensin J1-1 (Capsicum annuum (Capsicum pepper)).